Here is a 183-residue protein sequence, read N- to C-terminus: Peptide deformylase (183 aa).

Fe cation is bound by residues C110 and H153. The active site involves E154. H157 contributes to the Fe cation binding site.

This sequence belongs to the polypeptide deformylase family. Fe(2+) serves as cofactor.

The catalysed reaction is N-terminal N-formyl-L-methionyl-[peptide] + H2O = N-terminal L-methionyl-[peptide] + formate. In terms of biological role, removes the formyl group from the N-terminal Met of newly synthesized proteins. Requires at least a dipeptide for an efficient rate of reaction. N-terminal L-methionine is a prerequisite for activity but the enzyme has broad specificity at other positions. The polypeptide is Peptide deformylase (Listeria monocytogenes serotype 4b (strain CLIP80459)).